Reading from the N-terminus, the 60-residue chain is Large ribosomal subunit protein uL30 (60 aa).

It belongs to the universal ribosomal protein uL30 family. In terms of assembly, part of the 50S ribosomal subunit.

In Bacillus pumilus (strain SAFR-032), this protein is Large ribosomal subunit protein uL30.